A 201-amino-acid polypeptide reads, in one-letter code: 3-mercaptopropionate dioxygenase (201 aa).

The Fe cation site is built by H89, H91, and H142.

The protein belongs to the cysteine dioxygenase family. Forms homodimer in the crystal; however, there is no evidence that the dimer exists under physiological conditions or has biological significance. Fe(2+) is required as a cofactor.

It catalyses the reaction 3-sulfanylpropanoate + O2 = 3-sulfinopropanoate + H(+). Functionally, thiol dioxygenase that catalyzes the dioxygenation of 3-mercaptopropionate (3-MPA) to 3-sulfinopropionate (3-SPA). To a lesser extent (40-fold lower efficiency), is also able to oxidize cysteine to cysteine sulfinate (CSA). Cannot use N-acetyl-L-cysteine, homocysteine, and cysteamine as substrates. The physiological role of this enzyme is unclear. This Pseudomonas aeruginosa (strain ATCC 15692 / DSM 22644 / CIP 104116 / JCM 14847 / LMG 12228 / 1C / PRS 101 / PAO1) protein is 3-mercaptopropionate dioxygenase.